We begin with the raw amino-acid sequence, 367 residues long: MANQGDFPKRTETKKRPLHNIYGKEILRKRLEEENFSRTTLSFYRYVILENVQELRDQLYAEWEILGVLGRIYIAREGINAQLSIPSHNLDFFRKNLDSRNQFKDMQFKIAVEDDSKSFLKLDLKIKKKIVADGLNDDAFDVTNVGKHLSAEEFNLHMEDENSIVVDVRNHYESEIGHFENAILPQSDTFREELRILLELLNGKENHKILMYCTGGIRCEKASAWLKHHGYKDVNQLHGGIISYAHEVSQKGLESKFKGKNFVFDGRLQEAIGNEVISSCHQCGAKCDRHVNCENPGCHVLFIQCPSCSEKFEGCCTLECQNVLHLPKEKQKEIRKGKLNENRFFSKSKIRPKISELYHGILFKSSK.

Residues 159–253 (EDENSIVVDV…YAHEVSQKGL (95 aa)) form the Rhodanese domain. Cys-213 (cysteine persulfide intermediate) is an active-site residue.

This sequence belongs to the TrhO family.

The catalysed reaction is uridine(34) in tRNA + AH2 + O2 = 5-hydroxyuridine(34) in tRNA + A + H2O. Its function is as follows. Catalyzes oxygen-dependent 5-hydroxyuridine (ho5U) modification at position 34 in tRNAs. This chain is tRNA uridine(34) hydroxylase, found in Leptospira interrogans serogroup Icterohaemorrhagiae serovar Lai (strain 56601).